The chain runs to 367 residues: Isoflavone 4'-O-methyltransferase (367 aa).

S-adenosyl-L-methionine is bound by residues 209–212, Asp233, 233–234, 253–254, and Lys267; these read VGGG, DQ, and DM. His271 serves as the catalytic Proton acceptor.

It belongs to the class I-like SAM-binding methyltransferase superfamily. Cation-independent O-methyltransferase family. COMT subfamily.

The catalysed reaction is a 4'-hydroxyisoflavone + S-adenosyl-L-methionine = a 4'-methoxyisoflavone + S-adenosyl-L-homocysteine + H(+). It catalyses the reaction (2R,3S)-2,4',7-trihydroxyisoflavanone + S-adenosyl-L-methionine = (2R,3S)-2,7-dihydroxy-4'-methoxyisoflavanone + S-adenosyl-L-homocysteine + H(+). In terms of biological role, 2-hydroxyisoflavanone 4'-O-methyltransferase involved in the biosynthesis of formononetin. Can use 2,7,4'-trihydroxyisoflavanone, (+)-6a-hydroxymaackiain or medicarpin as substrate, but not daidzein or (-)-6a-hydroxymaackiain. This chain is Isoflavone 4'-O-methyltransferase (HI4'OMT), found in Glycyrrhiza echinata (Licorice).